Here is a 319-residue protein sequence, read N- to C-terminus: Beta-ketoacyl-[acyl-carrier-protein] synthase III (319 aa).

Active-site residues include Cys-112 and His-246. The segment at 247 to 251 is ACP-binding; it reads QANFR. Asn-276 is a catalytic residue.

Belongs to the thiolase-like superfamily. FabH family. In terms of assembly, homodimer.

Its subcellular location is the cytoplasm. The enzyme catalyses malonyl-[ACP] + acetyl-CoA + H(+) = 3-oxobutanoyl-[ACP] + CO2 + CoA. It functions in the pathway lipid metabolism; fatty acid biosynthesis. Its function is as follows. Catalyzes the condensation reaction of fatty acid synthesis by the addition to an acyl acceptor of two carbons from malonyl-ACP. Catalyzes the first condensation reaction which initiates fatty acid synthesis and may therefore play a role in governing the total rate of fatty acid production. Possesses both acetoacetyl-ACP synthase and acetyl transacylase activities. Its substrate specificity determines the biosynthesis of branched-chain and/or straight-chain of fatty acids. This is Beta-ketoacyl-[acyl-carrier-protein] synthase III from Shewanella oneidensis (strain ATCC 700550 / JCM 31522 / CIP 106686 / LMG 19005 / NCIMB 14063 / MR-1).